The primary structure comprises 305 residues: UDP-3-O-acyl-N-acetylglucosamine deacetylase (305 aa).

Zn(2+)-binding residues include His79, His238, and Asp242. His265 (proton donor) is an active-site residue.

Belongs to the LpxC family. Requires Zn(2+) as cofactor.

The catalysed reaction is a UDP-3-O-[(3R)-3-hydroxyacyl]-N-acetyl-alpha-D-glucosamine + H2O = a UDP-3-O-[(3R)-3-hydroxyacyl]-alpha-D-glucosamine + acetate. The protein operates within glycolipid biosynthesis; lipid IV(A) biosynthesis; lipid IV(A) from (3R)-3-hydroxytetradecanoyl-[acyl-carrier-protein] and UDP-N-acetyl-alpha-D-glucosamine: step 2/6. Its function is as follows. Catalyzes the hydrolysis of UDP-3-O-myristoyl-N-acetylglucosamine to form UDP-3-O-myristoylglucosamine and acetate, the committed step in lipid A biosynthesis. This Actinobacillus succinogenes (strain ATCC 55618 / DSM 22257 / CCUG 43843 / 130Z) protein is UDP-3-O-acyl-N-acetylglucosamine deacetylase.